Here is a 139-residue protein sequence, read N- to C-terminus: Membrane protein YqfB (139 aa).

The helical transmembrane segment at 3–23 (DLLTNPLIIAAIIGIISAIFG) threads the bilayer. The tract at residues 25–87 (KSKEEKQNSQ…TARNLKGLER (63 aa)) is disordered. Positions 62-97 (NRMEQARREAEERRRETARNLKGLERDLAAAKQKTV) form a coiled coil. Residues 65-87 (EQARREAEERRRETARNLKGLER) are compositionally biased toward basic and acidic residues.

Its subcellular location is the cell membrane. The chain is Membrane protein YqfB (yqfB) from Bacillus subtilis (strain 168).